The primary structure comprises 228 residues: Cytidylate kinase (228 aa).

17–25 (GPTASGKGT) contributes to the ATP binding site.

This sequence belongs to the cytidylate kinase family. Type 1 subfamily.

The protein resides in the cytoplasm. The enzyme catalyses CMP + ATP = CDP + ADP. The catalysed reaction is dCMP + ATP = dCDP + ADP. The sequence is that of Cytidylate kinase from Burkholderia cenocepacia (strain HI2424).